A 1576-amino-acid polypeptide reads, in one-letter code: Pentafunctional AROM polypeptide (1576 aa).

A 3-dehydroquinate synthase region spans residues 1–387 (MGSTTFENPT…YEPKASVVED (387 aa)). NAD(+) contacts are provided by residues 49 to 51 (DTN), 86 to 89 (ENSK), 117 to 119 (GGV), and Asp122. Position 133 (Arg133) interacts with 7-phospho-2-dehydro-3-deoxy-D-arabino-heptonate. 142 to 143 (TT) serves as a coordination point for NAD(+). Positions 149 and 155 each coordinate 7-phospho-2-dehydro-3-deoxy-D-arabino-heptonate. Lys164 is an NAD(+) binding site. Asn165 lines the 7-phospho-2-dehydro-3-deoxy-D-arabino-heptonate pocket. NAD(+)-binding positions include 182-185 (FLET) and Asn193. A Zn(2+)-binding site is contributed by Glu197. 7-phospho-2-dehydro-3-deoxy-D-arabino-heptonate contacts are provided by residues 197 to 200 (EVVK) and Lys253. The active-site Proton acceptor; for 3-dehydroquinate synthase activity is the Glu263. Residues 267-271 (RNILN) and His274 contribute to the 7-phospho-2-dehydro-3-deoxy-D-arabino-heptonate site. Residue His274 coordinates Zn(2+). Residue His278 is the Proton acceptor; for 3-dehydroquinate synthase activity of the active site. 7-phospho-2-dehydro-3-deoxy-D-arabino-heptonate contacts are provided by His290 and Lys359. His290 provides a ligand contact to Zn(2+). Residues 400-841 (VRPSVPETLN…WDILSKSFQV (442 aa)) are EPSP synthase. Cys823 (for EPSP synthase activity) is an active-site residue. The shikimate kinase stretch occupies residues 863–1055 (DKSIFIIGMR…RNKPQSFFVS (193 aa)). 870–877 (GMRGAGKT) is a binding site for ATP. The tract at residues 1056–1276 (LTMPDISGAA…AAPGQLSAAE (221 aa)) is 3-dehydroquinase. Residue His1179 is the Proton acceptor; for 3-dehydroquinate dehydratase activity of the active site. Catalysis depends on Lys1207, which acts as the Schiff-base intermediate with substrate; for 3-dehydroquinate dehydratase activity. The shikimate dehydrogenase stretch occupies residues 1289-1576 (PKSFYLFGTP…RAAVMGDSTA (288 aa)).

The protein in the N-terminal section; belongs to the sugar phosphate cyclases superfamily. Dehydroquinate synthase family. In the 2nd section; belongs to the EPSP synthase family. It in the 3rd section; belongs to the shikimate kinase family. This sequence in the 4th section; belongs to the type-I 3-dehydroquinase family. The protein in the C-terminal section; belongs to the shikimate dehydrogenase family. Homodimer. Requires Zn(2+) as cofactor.

The protein resides in the cytoplasm. The catalysed reaction is 7-phospho-2-dehydro-3-deoxy-D-arabino-heptonate = 3-dehydroquinate + phosphate. It carries out the reaction 3-dehydroquinate = 3-dehydroshikimate + H2O. The enzyme catalyses shikimate + NADP(+) = 3-dehydroshikimate + NADPH + H(+). It catalyses the reaction shikimate + ATP = 3-phosphoshikimate + ADP + H(+). The catalysed reaction is 3-phosphoshikimate + phosphoenolpyruvate = 5-O-(1-carboxyvinyl)-3-phosphoshikimate + phosphate. Its pathway is metabolic intermediate biosynthesis; chorismate biosynthesis; chorismate from D-erythrose 4-phosphate and phosphoenolpyruvate: step 2/7. It functions in the pathway metabolic intermediate biosynthesis; chorismate biosynthesis; chorismate from D-erythrose 4-phosphate and phosphoenolpyruvate: step 3/7. It participates in metabolic intermediate biosynthesis; chorismate biosynthesis; chorismate from D-erythrose 4-phosphate and phosphoenolpyruvate: step 4/7. The protein operates within metabolic intermediate biosynthesis; chorismate biosynthesis; chorismate from D-erythrose 4-phosphate and phosphoenolpyruvate: step 5/7. Its pathway is metabolic intermediate biosynthesis; chorismate biosynthesis; chorismate from D-erythrose 4-phosphate and phosphoenolpyruvate: step 6/7. The AROM polypeptide catalyzes 5 consecutive enzymatic reactions in prechorismate polyaromatic amino acid biosynthesis. This chain is Pentafunctional AROM polypeptide, found in Sclerotinia sclerotiorum (strain ATCC 18683 / 1980 / Ss-1) (White mold).